The following is a 577-amino-acid chain: Moesin (577 aa).

The FERM domain occupies P2–R295. At S74 the chain carries Phosphoserine. An N6-acetyllysine modification is found at K79. The residue at position 83 (K83) is an N6-succinyllysine. A [IL]-x-C-x-x-[DE] motif motif is present at residues I115–E120. Y116 bears the Phosphotyrosine mark. C117 is subject to S-nitrosocysteine. N6-acetyllysine occurs at positions 139 and 165. 3 disordered regions span residues L323–R342, L375–D409, and A466–V518. The span at L375–E401 shows a compositional bias: basic and acidic residues. At S407 the chain carries Phosphoserine. A compositionally biased stretch (acidic residues) spans A476–G487. Positions A492–V518 are enriched in basic and acidic residues. S527 is modified (phosphoserine). T558 is subject to Phosphothreonine; by ROCK2 and STK10.

In terms of assembly, in resting T-cells, part of a PAG1-NHERF1-MSN complex which is disrupted upon TCR activation. Interacts with NHERF1. Interacts with PPP1R16B. Interacts with SELPLG and SYK; these interactions mediate the activation of SYK by SELPLG. Interacts with PDPN (via cytoplasmic domain); this interaction activates RHOA and promotes epithelial-mesenchymal transition. Interacts with SPN/CD43 cytoplasmic tail. Interacts with CD44. Interacts with ICAM2. Interacts with ICAM3 (via C-terminus). Interacts with PDZD8. Interacts with F-actin. Interacts with CD46. Interacts with PTPN6. As to quaternary structure, (Microbial infection) Interacts with HIV-1 envelope protein gp120. Phosphorylation on Thr-558 is crucial for the formation of microvilli-like structures. Phosphorylation by ROCK2 suppresses the head-to-tail association of the N-terminal and C-terminal halves resulting in an opened conformation which is capable of actin and membrane-binding. Phosphorylation on Thr-558 by STK10 negatively regulates lymphocyte migration and polarization. Post-translationally, S-nitrosylation of Cys-117 is induced by interferon-gamma and oxidatively-modified low-densitity lipoprotein (LDL(ox)) implicating the iNOS-S100A8/9 transnitrosylase complex. In all tissues and cultured cells studied.

It localises to the cell membrane. Its subcellular location is the cytoplasm. It is found in the cytoskeleton. The protein localises to the apical cell membrane. The protein resides in the cell projection. It localises to the microvillus membrane. Its subcellular location is the microvillus. A head-to-tail association, of the N-terminal and C-terminal halves results in a closed conformation (inactive form) which is incapable of actin or membrane-binding. In terms of biological role, ezrin-radixin-moesin (ERM) family protein that connects the actin cytoskeleton to the plasma membrane and thereby regulates the structure and function of specific domains of the cell cortex. Tethers actin filaments by oscillating between a resting and an activated state providing transient interactions between moesin and the actin cytoskeleton. Once phosphorylated on its C-terminal threonine, moesin is activated leading to interaction with F-actin and cytoskeletal rearrangement. These rearrangements regulate many cellular processes, including cell shape determination, membrane transport, and signal transduction. The role of moesin is particularly important in immunity acting on both T and B-cells homeostasis and self-tolerance, regulating lymphocyte egress from lymphoid organs. Modulates phagolysosomal biogenesis in macrophages. Also participates in immunologic synapse formation. The chain is Moesin from Homo sapiens (Human).